Here is a 145-residue protein sequence, read N- to C-terminus: MDVGIILGILSAMGFLVFLGIGGHILIGYEIIRKISKAYEKGEDVKELENKIINKSHLTNTLEKITTFTLTSIFLFEMEKYRYVIDVGYSILFLVTLTLYLVPNLSLLVWVTFFGATVFMIMLWILRFRAIKEFNKAFIEELTTQ.

A run of 3 helical transmembrane segments spans residues 3 to 23 (VGII…GIGG), 83 to 103 (YVID…YLVP), and 105 to 125 (LSLL…MLWI).

Its subcellular location is the cell membrane. This is an uncharacterized protein from Methanocaldococcus jannaschii (strain ATCC 43067 / DSM 2661 / JAL-1 / JCM 10045 / NBRC 100440) (Methanococcus jannaschii).